Here is a 610-residue protein sequence, read N- to C-terminus: Lipoprotein LpqB (610 aa).

The signal sequence occupies residues 1–27; that stretch reads MGAEGGGRRRALRLGAYVGCGAVLLTG. Cys28 carries N-palmitoyl cysteine lipidation. The S-diacylglycerol cysteine moiety is linked to residue Cys28.

It belongs to the LpqB lipoprotein family.

The protein resides in the cell membrane. This chain is Lipoprotein LpqB, found in Streptomyces avermitilis (strain ATCC 31267 / DSM 46492 / JCM 5070 / NBRC 14893 / NCIMB 12804 / NRRL 8165 / MA-4680).